The primary structure comprises 117 residues: Large ribosomal subunit protein uL18 (117 aa).

Belongs to the universal ribosomal protein uL18 family. In terms of assembly, part of the 50S ribosomal subunit; part of the 5S rRNA/L5/L18/L25 subcomplex. Contacts the 5S and 23S rRNAs.

Its function is as follows. This is one of the proteins that bind and probably mediate the attachment of the 5S RNA into the large ribosomal subunit, where it forms part of the central protuberance. The protein is Large ribosomal subunit protein uL18 of Glaesserella parasuis serovar 5 (strain SH0165) (Haemophilus parasuis).